Here is a 617-residue protein sequence, read N- to C-terminus: Pyrophosphate--fructose 6-phosphate 1-phosphotransferase subunit alpha 2 (617 aa).

It belongs to the phosphofructokinase type A (PFKA) family. PPi-dependent PFK group II subfamily. Clade 'Long' sub-subfamily. Tetramer of two alpha (regulatory) and two beta (catalytic) chains. In terms of tissue distribution, expressed in roots and specific parts such as the trichomes of leaves, cotyledon veins, as well as in stamen and gynoecium of flowers.

The protein resides in the cytoplasm. It participates in carbohydrate degradation; glycolysis; D-glyceraldehyde 3-phosphate and glycerone phosphate from D-glucose: step 3/4. Its activity is regulated as follows. Allosterically activated by fructose 2,6-bisphosphate. Its function is as follows. Regulatory subunit of pyrophosphate--fructose 6-phosphate 1-phosphotransferase. This Arabidopsis thaliana (Mouse-ear cress) protein is Pyrophosphate--fructose 6-phosphate 1-phosphotransferase subunit alpha 2.